The chain runs to 195 residues: Molybdenum cofactor guanylyltransferase (195 aa).

GTP contacts are provided by residues 10–12, Lys-23, Asn-51, Asp-69, and Asp-99; that span reads LAG. Asp-99 lines the Mg(2+) pocket.

Belongs to the MobA family. As to quaternary structure, monomer. Mg(2+) serves as cofactor.

It localises to the cytoplasm. It carries out the reaction Mo-molybdopterin + GTP + H(+) = Mo-molybdopterin guanine dinucleotide + diphosphate. In terms of biological role, transfers a GMP moiety from GTP to Mo-molybdopterin (Mo-MPT) cofactor (Moco or molybdenum cofactor) to form Mo-molybdopterin guanine dinucleotide (Mo-MGD) cofactor. The polypeptide is Molybdenum cofactor guanylyltransferase (Yersinia pseudotuberculosis serotype O:1b (strain IP 31758)).